The primary structure comprises 129 residues: Thioredoxin-like 3-3 (129 aa).

Over residues 1–10 the composition is skewed to basic and acidic residues; it reads MEEGEAKKTG. The disordered stretch occupies residues 1–30; sequence MEEGEAKKTGLEGTGLSLPGSSHGNLRSAG. In terms of domain architecture, Thioredoxin spans 7–129; it reads KKTGLEGTGL…RLHDRLWLHS (123 aa). Over residues 19–30 the composition is skewed to polar residues; the sequence is PGSSHGNLRSAG. Residues cysteine 58 and cysteine 61 each act as nucleophile in the active site. An intrachain disulfide couples cysteine 58 to cysteine 61.

It belongs to the thioredoxin family.

In terms of biological role, probable thiol-disulfide oxidoreductase that may participate in various redox reactions. This chain is Thioredoxin-like 3-3, found in Oryza sativa subsp. japonica (Rice).